Here is a 161-residue protein sequence, read N- to C-terminus: Small ribosomal subunit protein uS9 (161 aa).

Belongs to the universal ribosomal protein uS9 family.

The polypeptide is Small ribosomal subunit protein uS9 (Bartonella tribocorum (strain CIP 105476 / IBS 506)).